The sequence spans 406 residues: Arginine biosynthesis bifunctional protein ArgJ (406 aa).

Substrate is bound by residues threonine 152, lysine 179, threonine 190, glutamate 277, asparagine 401, and serine 406. The active-site Nucleophile is threonine 190.

It belongs to the ArgJ family. Heterotetramer of two alpha and two beta chains.

Its subcellular location is the cytoplasm. It carries out the reaction N(2)-acetyl-L-ornithine + L-glutamate = N-acetyl-L-glutamate + L-ornithine. The enzyme catalyses L-glutamate + acetyl-CoA = N-acetyl-L-glutamate + CoA + H(+). It participates in amino-acid biosynthesis; L-arginine biosynthesis; L-ornithine and N-acetyl-L-glutamate from L-glutamate and N(2)-acetyl-L-ornithine (cyclic): step 1/1. Its pathway is amino-acid biosynthesis; L-arginine biosynthesis; N(2)-acetyl-L-ornithine from L-glutamate: step 1/4. In terms of biological role, catalyzes two activities which are involved in the cyclic version of arginine biosynthesis: the synthesis of N-acetylglutamate from glutamate and acetyl-CoA as the acetyl donor, and of ornithine by transacetylation between N(2)-acetylornithine and glutamate. In Neisseria gonorrhoeae, this protein is Arginine biosynthesis bifunctional protein ArgJ.